Here is a 150-residue protein sequence, read N- to C-terminus: MAIYQIVEIGSEVLREKAVPVKEITPNIAKLLDNMLDTLYDANGVGLAAPQVGVSKRVVVIDVGEGPLELINPVIIAKEGEDLDDEGCLSIPGITGQVARAAKVKVEALNRQGELQVIEGEGLLSRCLQHEIDHLEGILFVDKAKKTSRR.

Fe cation is bound by residues C88 and H130. The active site involves E131. Residue H134 participates in Fe cation binding.

Belongs to the polypeptide deformylase family. It depends on Fe(2+) as a cofactor.

It carries out the reaction N-terminal N-formyl-L-methionyl-[peptide] + H2O = N-terminal L-methionyl-[peptide] + formate. Functionally, removes the formyl group from the N-terminal Met of newly synthesized proteins. Requires at least a dipeptide for an efficient rate of reaction. N-terminal L-methionine is a prerequisite for activity but the enzyme has broad specificity at other positions. This is Peptide deformylase from Desulfitobacterium hafniense (strain DSM 10664 / DCB-2).